The chain runs to 1133 residues: MSSLSRELVFLILQFLDEEKFKETVHKLEQESAFYFNMKHFEDLVQGGEWDEVEKYLSGFTKVEDNRYSMKIFFEIRKQKYLEALDRHDRAKAVEILVKDLKVFASFNEELFKEITQLLTLENFRQNEQLSKYGDTKSARNIMLMELKKLIEANPLFRDKLNFPPFKVSRLRTLINQSLNWQHQLCKNPRPNPDIKTLFTDHSCAAPTNGARAPPPANGPLVGPIPKSAAFPPMGAHAPFQPVVSPSPNAIAGWMTNANPSLPHAAVAQGPPGLVQPPNTAAFLKHPRTPTSAPAIDYQSADSEHLMKRMRVGQPDEVSFSGASHPANIYTQDDLPKQVVRNLNQGSNVMSLDFHPVQQTILLVGTNVGDIGIWEVGSRERIAHKTFKVWDISSCTLPLQAALMKDAAISVNRCLWSPDGSILGVAFSKHIVQTYAFVLNGELRQQAEIDAHIGGVNDIAFSHPNKTLSIITCGDDKLIKVWDAQTGQKQYTFEGHEAPVYSVCPHYKESIQFIFSTAIDGKIKAWLYDCLGSRVDYDAPGHWCTTMAYSADGTRLFSCGTSKDGDSHLVEWNETEGAIKRTYNGFRKRSLGVVQFDTTRNRFLAAGDEFVVKFWDMDNTNILTTTDCDGGLPASPRLRFNREGSLLAVTANENGIKILANTDGQRLLRMLESRAYEGSRGPPQQINTKPPIVNTLGSVSNVSSPMAVNSERPDRALPTVSMSGLAPMDVSRTPDVKPRITDESEKVKTWKLADIGDSGHLRALRMPDTSATSSKVVRLLYTNNGVALLALGSNAVHKLWKWQRTDRNPNGKSTASFTPQMWQPANGILMANDTSDGNPEEATACIALSKNDSYVMSASGGKVSLFNMMTFKVMTTFMAPPPAATFLAFHPQDNNIIAIGMEDSTIQIYNVRVDEVKSKLKGHSKKITGLAFSQSMNMLVSSGADAQLCAWSIDGWEKKKSRYIQSPANRSGALVGDTRVQFHNDQTHILVVHESQLAIYDAKLECLRSWSPREALPAPISSAIYSCDGLLIYAGFCDGAIGVFEAESLRLRCRIAPSAYIPPSMSSGGSVYPMVVAAHPLEPNQIAVGMSDGAVHVVEPLDSDPKWGVAPPQDNGTHPTISAAPAAANKPEV.

The 33-residue stretch at 4–36 (LSRELVFLILQFLDEEKFKETVHKLEQESAFYF) folds into the LisH domain. Positions 34 to 92 (FYFNMKHFEDLVQGGEWDEVEKYLSGFTKVEDNRYSMKIFFEIRKQKYLEALDRHDRAK) constitute a CTLH domain. WD repeat units lie at residues 344–384 (NQGS…RIAH), 451–492 (AHIG…KQYT), 495–536 (GHEA…SRVD), 539–582 (APGH…IKRT), 586–625 (FRKR…ILTT), 630–669 (GGLP…RLLR), 771–810 (ATSS…RNPN), 838–876 (NPEE…VMTT), 879–919 (APPP…VKSK), 922–961 (GHSK…KKKS), 970–1011 (RSGA…RSWS), and 1015–1054 (ALPA…LRCR). The interval 1102–1133 (DSDPKWGVAPPQDNGTHPTISAAPAAANKPEV) is disordered.

In terms of assembly, tetramer. Interacts with D53, probably via the EAR motifs. Binds to AP2-1/TOE1, AP2-3/SNB and AP2-2/IDS1. Interacts with WOX1. Interacts with MOF1. Expressed in stems and panicles. Detected in roots, seeds, leaves and sheath. Expressed in the meristem and lateral organ primordia.

It is found in the nucleus. Functionally, transcriptional corepressor involved in branch formation regulation, presumably by suppressing primary branch formation and promoting secondary branch formation. Required for the cell elongation in the first internode and pollen development. Probable downstream regulator of strigolactones signaling important in axillary meristem maintenance. Acts in auxin signaling and is associated with the regulation of histone deacetylation. Essential for the function of miR172 microRNA and its target genes in regulating panicle development. The sequence is that of Protein TOPLESS-RELATED PROTEIN 2 from Oryza sativa subsp. japonica (Rice).